Consider the following 253-residue polypeptide: Triosephosphate isomerase (253 aa).

Residue 12-14 (NWK) coordinates substrate. His-100 functions as the Electrophile in the catalytic mechanism. The Proton acceptor role is filled by Glu-170. Substrate-binding positions include Gly-176, Ser-215, and 236–237 (GG).

Belongs to the triosephosphate isomerase family. Homodimer.

It localises to the cytoplasm. The catalysed reaction is D-glyceraldehyde 3-phosphate = dihydroxyacetone phosphate. Its pathway is carbohydrate biosynthesis; gluconeogenesis. It functions in the pathway carbohydrate degradation; glycolysis; D-glyceraldehyde 3-phosphate from glycerone phosphate: step 1/1. Involved in the gluconeogenesis. Catalyzes stereospecifically the conversion of dihydroxyacetone phosphate (DHAP) to D-glyceraldehyde-3-phosphate (G3P). This chain is Triosephosphate isomerase, found in Rhodopseudomonas palustris (strain BisA53).